Here is a 106-residue protein sequence, read N- to C-terminus: ATP-dependent Clp protease adapter protein ClpS (106 aa).

It belongs to the ClpS family. Binds to the N-terminal domain of the chaperone ClpA.

Functionally, involved in the modulation of the specificity of the ClpAP-mediated ATP-dependent protein degradation. This is ATP-dependent Clp protease adapter protein ClpS from Erwinia tasmaniensis (strain DSM 17950 / CFBP 7177 / CIP 109463 / NCPPB 4357 / Et1/99).